We begin with the raw amino-acid sequence, 359 residues long: Methylthioribose-1-phosphate isomerase (359 aa).

Substrate-binding positions include 50–52 (RGA), arginine 93, and glutamine 200. Aspartate 241 acts as the Proton donor in catalysis. 251–252 (NK) is a substrate binding site.

It belongs to the eIF-2B alpha/beta/delta subunits family. MtnA subfamily.

The catalysed reaction is 5-(methylsulfanyl)-alpha-D-ribose 1-phosphate = 5-(methylsulfanyl)-D-ribulose 1-phosphate. The protein operates within amino-acid biosynthesis; L-methionine biosynthesis via salvage pathway; L-methionine from S-methyl-5-thio-alpha-D-ribose 1-phosphate: step 1/6. In terms of biological role, catalyzes the interconversion of methylthioribose-1-phosphate (MTR-1-P) into methylthioribulose-1-phosphate (MTRu-1-P). The chain is Methylthioribose-1-phosphate isomerase from Symbiobacterium thermophilum (strain DSM 24528 / JCM 14929 / IAM 14863 / T).